We begin with the raw amino-acid sequence, 188 residues long: Large ribosomal subunit protein eL18 (188 aa).

The interval 147-188 is disordered; sequence EANKHFGPAPGVPHSHTKAHVRSKGRQFERARGRRTSKGYKK. Basic residues-rich tracts occupy residues 161–171 and 178–188; these read SHTKAHVRSKG and RGRRTSKGYKK.

This sequence belongs to the eukaryotic ribosomal protein eL18 family.

The protein resides in the cytoplasm. In Diaphorina citri (Asian citrus psyllid), this protein is Large ribosomal subunit protein eL18 (RpL18).